A 416-amino-acid chain; its full sequence is Enterobactin exporter EntS (416 aa).

Residues Met-1 to Ala-21 lie on the Cytoplasmic side of the membrane. Residues Val-22 to Val-42 traverse the membrane as a helical segment. Residues Gln-43–Gly-55 lie on the Periplasmic side of the membrane. A helical membrane pass occupies residues Leu-56 to Ala-76. Over Asp-77–Lys-83 the chain is Cytoplasmic. Residues Val-84–Leu-104 form a helical membrane-spanning segment. The Periplasmic segment spans residues Leu-105 to Ser-109. A helical membrane pass occupies residues Leu-110–Ala-130. Over Leu-131–Arg-156 the chain is Cytoplasmic. The helical transmembrane segment at Leu-157 to Trp-177 threads the bilayer. A topological domain (periplasmic) is located at residue Asn-178. A helical membrane pass occupies residues Tyr-179 to Leu-199. Residues Pro-200–Arg-218 lie on the Cytoplasmic side of the membrane. Residues Phe-219 to Ala-239 traverse the membrane as a helical segment. Residues Ser-240–Ser-256 lie on the Periplasmic side of the membrane. A helical membrane pass occupies residues Ala-257–Thr-277. Over Ser-278–Pro-287 the chain is Cytoplasmic. Residues Gly-288–Leu-307 traverse the membrane as a helical segment. Residues Met-308–Leu-313 are Periplasmic-facing. Residues Gly-314–Leu-336 form a helical membrane-spanning segment. At Gln-337–Asn-356 the chain is on the cytoplasmic side. A helical membrane pass occupies residues Val-357–Val-377. Position 378 (Ala-378) is a topological domain, periplasmic. The chain crosses the membrane as a helical span at residues Ser-379–Val-399. Residues Glu-400–Ser-416 lie on the Cytoplasmic side of the membrane.

Belongs to the major facilitator superfamily. EntS (TC 2.A.1.38) family.

The protein localises to the cell inner membrane. Component of an export pathway for enterobactin. The sequence is that of Enterobactin exporter EntS from Escherichia coli O127:H6 (strain E2348/69 / EPEC).